We begin with the raw amino-acid sequence, 472 residues long: Sarcalumenin (472 aa).

The first 19 residues, 1 to 19 (MRALLLFCFVASLLLSGQA), serve as a signal peptide directing secretion. In terms of domain architecture, Dynamin-type G spans 89–330 (ITSKPMVLFL…IENRLENKIA (242 aa)). The interval 99–106 (GPWSVGKS) is G1 motif. Ser-102 carries N-linked (GlcNAc...) asparagine glycosylation. Residues 127–128 (EP) are G2 motif. Positions 189 to 192 (DTPG) are G3 motif. The segment at 254–257 (NKAD) is G4 motif. A region of interest (G5 motif) is located at residue Pro-277. Residues Asn-280 and Asn-388 are each glycosylated (N-linked (GlcNAc...) asparagine).

The protein belongs to the TRAFAC class dynamin-like GTPase superfamily. Dynamin/Fzo/YdjA family. N-glycosylated. Detected in skeletal muscle.

It is found in the sarcoplasmic reticulum lumen. Its subcellular location is the sarcoplasmic reticulum membrane. This is Sarcalumenin (SRL) from Oryctolagus cuniculus (Rabbit).